Reading from the N-terminus, the 496-residue chain is Glycylpeptide N-tetradecanoyltransferase 1 (496 aa).

The segment at 1 to 82 (MADESETAVK…SAQDQPVKMN (82 aa)) is disordered. S31 and S47 each carry phosphoserine. Residues 55 to 66 (KKKKKKQKKKKE) are compositionally biased toward basic residues. Position 83 is a phosphoserine (S83). Q118, F119, W120, F247, L248, C249, V250, S256, R258, V259, and A260 together coordinate tetradecanoyl-CoA.

Belongs to the NMT family.

Its subcellular location is the cytoplasm. The protein resides in the cytosol. The protein localises to the membrane. The enzyme catalyses N-terminal glycyl-[protein] + tetradecanoyl-CoA = N-tetradecanoylglycyl-[protein] + CoA + H(+). The catalysed reaction is N-terminal glycyl-L-lysyl-[protein] + tetradecanoyl-CoA = N-terminal glycyl-(N(6)-tetradecanoyl)-L-lysyl-[protein] + CoA + H(+). Functionally, adds a myristoyl group to the N-terminal glycine residue of certain cellular and viral proteins. Also able to mediate N-terminal lysine myristoylation of proteins: catalyzes myristoylation of ARF6 on both 'Gly-2' and 'Lys-3'. Lysine myristoylation is required to maintain ARF6 on membranes during the GTPase cycle. The protein is Glycylpeptide N-tetradecanoyltransferase 1 (NMT1) of Pongo abelii (Sumatran orangutan).